A 390-amino-acid polypeptide reads, in one-letter code: 8-demethyl-8-(2-methoxy-alpha-L-rhamnosyl)-tetracenomycin-C 3'-O-methyltransferase (390 aa).

S-adenosyl-L-methionine-binding positions include 202 to 208 (ELGIGGY), serine 217, aspartate 234, 252 to 253 (SQ), and aspartate 275. A Mg(2+)-binding site is contributed by aspartate 275. Histidine 278 serves as the catalytic Proton acceptor. Glutamate 303 and aspartate 304 together coordinate Mg(2+).

It belongs to the methyltransferase OleY/MycE family. It depends on Mg(2+) as a cofactor.

The catalysed reaction is 8-demethyl-8-(2-O-methyl-alpha-L-rhamnosyl)-tetracenomycin C + S-adenosyl-L-methionine = 8-demethyl-8-(2,3-di-O-methyl-alpha-L-rhamnosyl)-tetracenomycin C + S-adenosyl-L-homocysteine + H(+). It functions in the pathway antibiotic biosynthesis. Functionally, O-methyltransferase involved in the biosynthesis of the permethylated L-rhamnose moiety of elloramycin, an antitumor polyketide. Mediates the methylation of the hydroxy groups at the 3'-position after the sugar moiety has been attached to the aglycon. This chain is 8-demethyl-8-(2-methoxy-alpha-L-rhamnosyl)-tetracenomycin-C 3'-O-methyltransferase, found in Streptomyces olivaceus.